The sequence spans 208 residues: Adenylyl-sulfate kinase 3 (208 aa).

37–45 provides a ligand contact to ATP; it reads GLSGSGKST. Substrate-binding positions include Asp-67, Arg-70, Arg-84, Asn-87, 110–111, and Gly-160; that span reads IS. Ser-111 functions as the Phosphoserine intermediate in the catalytic mechanism.

Belongs to the APS kinase family. In terms of tissue distribution, expressed in root vasculature, root tips, leaf epidermal and guard cells, pollen grains and radicle of immature seeds.

It localises to the cytoplasm. Its subcellular location is the cytosol. The catalysed reaction is adenosine 5'-phosphosulfate + ATP = 3'-phosphoadenylyl sulfate + ADP + H(+). The protein operates within sulfur metabolism; hydrogen sulfide biosynthesis; sulfite from sulfate: step 2/3. In terms of biological role, catalyzes the synthesis of activated sulfate for the sulfation of secondary metabolites, including the glucosinolates. Essential for plant reproduction and viability. The sequence is that of Adenylyl-sulfate kinase 3 from Arabidopsis thaliana (Mouse-ear cress).